Consider the following 73-residue polypeptide: Protein kish (73 aa).

An N-terminal signal peptide occupies residues 1-21 (MTAIFNFESLLFVILLTICTC). Topologically, residues 22–52 (TYLHRQFPALLEKRKEGVTMVFWKCARIGER) are lumenal. A helical membrane pass occupies residues 53-73 (ASPYISLFCVFMALRFIFGSS).

This sequence belongs to the KISH family.

It is found in the golgi apparatus membrane. The protein resides in the endoplasmic reticulum membrane. In terms of biological role, involved in the early part of the secretory pathway. The sequence is that of Protein kish (ksh1) from Schizosaccharomyces pombe (strain 972 / ATCC 24843) (Fission yeast).